The primary structure comprises 383 residues: 8-amino-7-oxononanoate synthase (383 aa).

A substrate-binding site is contributed by Arg23. A pyridoxal 5'-phosphate-binding site is contributed by Gly110–Phe111. Position 135 (His135) interacts with substrate. Pyridoxal 5'-phosphate contacts are provided by Ser181, His209, and Thr235. At Lys238 the chain carries N6-(pyridoxal phosphate)lysine. Position 351 (Thr351) interacts with substrate.

This sequence belongs to the class-II pyridoxal-phosphate-dependent aminotransferase family. BioF subfamily. In terms of assembly, homodimer. Requires pyridoxal 5'-phosphate as cofactor.

It carries out the reaction 6-carboxyhexanoyl-[ACP] + L-alanine + H(+) = (8S)-8-amino-7-oxononanoate + holo-[ACP] + CO2. The protein operates within cofactor biosynthesis; biotin biosynthesis. Functionally, catalyzes the decarboxylative condensation of pimeloyl-[acyl-carrier protein] and L-alanine to produce 8-amino-7-oxononanoate (AON), [acyl-carrier protein], and carbon dioxide. The protein is 8-amino-7-oxononanoate synthase of Aliivibrio fischeri (strain MJ11) (Vibrio fischeri).